An 80-amino-acid chain; its full sequence is Small ribosomal subunit protein bS18A (80 aa).

The protein belongs to the bacterial ribosomal protein bS18 family. As to quaternary structure, part of the 30S ribosomal subunit. Forms a tight heterodimer with protein bS6.

Functionally, binds as a heterodimer with protein bS6 to the central domain of the 16S rRNA, where it helps stabilize the platform of the 30S subunit. This chain is Small ribosomal subunit protein bS18A, found in Rhodococcus jostii (strain RHA1).